A 278-amino-acid polypeptide reads, in one-letter code: Large ribosomal subunit protein uL2 (278 aa).

Residues 212 to 278 (NRHRGIRPQT…IISRKKHKKG (67 aa)) are disordered. Positions 257–278 (YKTRKKKASDKLIISRKKHKKG) are enriched in basic residues.

The protein belongs to the universal ribosomal protein uL2 family. As to quaternary structure, part of the 50S ribosomal subunit. Forms a bridge to the 30S subunit in the 70S ribosome.

In terms of biological role, one of the primary rRNA binding proteins. Required for association of the 30S and 50S subunits to form the 70S ribosome, for tRNA binding and peptide bond formation. It has been suggested to have peptidyltransferase activity; this is somewhat controversial. Makes several contacts with the 16S rRNA in the 70S ribosome. The chain is Large ribosomal subunit protein uL2 from Helicobacter pylori (strain Shi470).